We begin with the raw amino-acid sequence, 251 residues long: 3-deoxy-manno-octulosonate cytidylyltransferase (251 aa).

Belongs to the KdsB family.

The protein localises to the cytoplasm. It carries out the reaction 3-deoxy-alpha-D-manno-oct-2-ulosonate + CTP = CMP-3-deoxy-beta-D-manno-octulosonate + diphosphate. The protein operates within nucleotide-sugar biosynthesis; CMP-3-deoxy-D-manno-octulosonate biosynthesis; CMP-3-deoxy-D-manno-octulosonate from 3-deoxy-D-manno-octulosonate and CTP: step 1/1. It functions in the pathway bacterial outer membrane biogenesis; lipopolysaccharide biosynthesis. Functionally, activates KDO (a required 8-carbon sugar) for incorporation into bacterial lipopolysaccharide in Gram-negative bacteria. This is 3-deoxy-manno-octulosonate cytidylyltransferase from Brucella ovis (strain ATCC 25840 / 63/290 / NCTC 10512).